We begin with the raw amino-acid sequence, 400 residues long: Formate-dependent phosphoribosylglycinamide formyltransferase (400 aa).

N(1)-(5-phospho-beta-D-ribosyl)glycinamide contacts are provided by residues 22–23 and Glu-82; that span reads EL. ATP is bound by residues Arg-115, Lys-157, 162 to 167, 197 to 200, and Glu-205; these read SSGKGQ and EGFV. Positions 120 to 315 constitute an ATP-grasp domain; it reads RLAAETLGVP…EFELHARAIL (196 aa). Positions 274 and 286 each coordinate Mg(2+). N(1)-(5-phospho-beta-D-ribosyl)glycinamide contacts are provided by residues Asp-293, Lys-362, and 369-370; that span reads RR.

It belongs to the PurK/PurT family. As to quaternary structure, homodimer.

The enzyme catalyses N(1)-(5-phospho-beta-D-ribosyl)glycinamide + formate + ATP = N(2)-formyl-N(1)-(5-phospho-beta-D-ribosyl)glycinamide + ADP + phosphate + H(+). It functions in the pathway purine metabolism; IMP biosynthesis via de novo pathway; N(2)-formyl-N(1)-(5-phospho-D-ribosyl)glycinamide from N(1)-(5-phospho-D-ribosyl)glycinamide (formate route): step 1/1. In terms of biological role, involved in the de novo purine biosynthesis. Catalyzes the transfer of formate to 5-phospho-ribosyl-glycinamide (GAR), producing 5-phospho-ribosyl-N-formylglycinamide (FGAR). Formate is provided by PurU via hydrolysis of 10-formyl-tetrahydrofolate. The chain is Formate-dependent phosphoribosylglycinamide formyltransferase from Mycolicibacterium smegmatis (strain ATCC 700084 / mc(2)155) (Mycobacterium smegmatis).